The chain runs to 409 residues: MAAMDADIAPFDTARTDHGLMDRAVEQARAAVGLPVGTRIVAAMSGGVDSTVTAALLAKAGYDVVGVTLQLYDHGAAITKKGACCAGQDILDARMAAERIGIPHYVLDYESRFKEQVIEEFADAYLRGETPIPCVRCNQTVKFRDLLDVARDLGAEAMATGHYVQRSFAAGANRPQLRRAADPAKDQSYFLFATTAEQLDFLRFPLGGMDKPTVRLVAAELGLAIADKPDSQDICFVPEGKYTTVIDRIRPHGALPGDLVHMDGRVLGRHEGVTRYTIGQRRGLNIAVGDPLFVVKIDADKRQVIVGPREALLTQALSLKEGNWLGVEDSLEAAAAAGAPVLARVRSTREPVPGRLTLVPGPNGGEPRLVFDGLEEGVAPGQACVLYDPADPERVLGGGFIVATERAGL.

ATP is bound by residues 43–50 and Leu69; that span reads AMSGGVDS. The active-site Nucleophile is Cys137. Cys137 and Cys235 form a disulfide bridge. Gly161 contributes to the ATP binding site. An interaction with tRNA region spans residues 185–187; sequence KDQ. The active-site Cysteine persulfide intermediate is Cys235.

This sequence belongs to the MnmA/TRMU family.

The protein resides in the cytoplasm. It carries out the reaction S-sulfanyl-L-cysteinyl-[protein] + uridine(34) in tRNA + AH2 + ATP = 2-thiouridine(34) in tRNA + L-cysteinyl-[protein] + A + AMP + diphosphate + H(+). Functionally, catalyzes the 2-thiolation of uridine at the wobble position (U34) of tRNA, leading to the formation of s(2)U34. The polypeptide is tRNA-specific 2-thiouridylase MnmA (Caulobacter sp. (strain K31)).